The following is a 1709-amino-acid chain: Sialoadhesin (1709 aa).

Residues 1-19 (MGFLPKLLLLASFFPAGQA) form the signal peptide. An Ig-like V-type domain is found at 20-136 (SWGVSSPQDV…DVKGTLVTVT (117 aa)). At 20-1641 (SWGVSSPQDV…ALHRLHQFQQ (1622 aa)) the chain is on the extracellular side. 4 disulfide bridges follow: Cys-36–Cys-166, Cys-41–Cys-98, Cys-160–Cys-217, and Cys-262–Cys-305. Residues Tyr-63, Arg-116, and 122–126 (VNRWS) each bind N-acetylneuraminate. Ig-like C2-type domains lie at 139 to 233 (PRVP…IHLQ), 238 to 320 (PKGV…PPIS), 326 to 405 (AEVQ…GPVS), 411 to 507 (PPLT…LDFH), 511 to 593 (ARLL…AVLT), 601 to 705 (PTFT…ATFN), 708 to 785 (ATVL…AQLS), 799 to 894 (PKLS…FQVR), 898 to 977 (VQVS…APIS), 984 to 1083 (PRHV…ADFD), 1085 to 1165 (QAVN…RPIT), and 1176 to 1248 (RLTY…SPLG). A glycan (N-linked (GlcNAc...) asparagine) is linked at Asn-159. Asn-265 and Asn-339 each carry an N-linked (GlcNAc...) asparagine glycan. 2 disulfide bridges follow: Cys-346–Cys-390 and Cys-433–Cys-491. N-linked (GlcNAc...) asparagine glycosylation occurs at Asn-499. 2 cysteine pairs are disulfide-bonded: Cys-531–Cys-575 and Cys-624–Cys-689. N-linked (GlcNAc...) asparagine glycans are attached at residues Asn-697, Asn-726, Asn-730, and Asn-741. Disulfide bonds link Cys-729/Cys-774 and Cys-817/Cys-876. Residue Asn-886 is glycosylated (N-linked (GlcNAc...) asparagine). Disulfide bonds link Cys-916-Cys-960 and Cys-1005-Cys-1067. N-linked (GlcNAc...) asparagine glycans are attached at residues Asn-1104 and Asn-1138. 2 disulfide bridges follow: Cys-1107–Cys-1149 and Cys-1193–Cys-1241. N-linked (GlcNAc...) asparagine glycosylation is present at Asn-1251. Ig-like C2-type domains lie at 1259-1341 (EGVR…AALQ), 1350-1442 (VLSS…RLQV), 1445-1528 (ARVV…VMLR), and 1536-1631 (PTMM…FGVR). 2 disulfides stabilise this stretch: Cys-1281–Cys-1324 and Cys-1367–Cys-1425. N-linked (GlcNAc...) asparagine glycans are attached at residues Asn-1462 and Asn-1476. 2 disulfides stabilise this stretch: Cys-1465-Cys-1511 and Cys-1554-Cys-1613. Residues 1642 to 1662 (LLWVLGLLVGLLLLLLGLGAC) form a helical membrane-spanning segment. The Cytoplasmic segment spans residues 1663 to 1709 (YTWRRRRVCKQSMGENSVEMAFQKETTQLIDPDAATCETSTCAPPLG).

The protein belongs to the immunoglobulin superfamily. SIGLEC (sialic acid binding Ig-like lectin) family. As to quaternary structure, interacts with TYROBP. Interacts with CLEC10A. In terms of tissue distribution, expressed by macrophages in various tissues. High levels are found in spleen, lymph node, perivascular macrophages in brain and lower levels in bone marrow, liver Kupffer cells and lamina propria of colon and lung. Also expressed by inflammatory macrophages in rheumatoid arthritis.

The protein resides in the cell membrane. Its subcellular location is the secreted. Its function is as follows. Macrophage-restricted adhesion molecule that mediates sialic-acid dependent binding to lymphocytes, including granulocytes, monocytes, natural killer cells, B-cells and CD8 T-cells. Plays a crucial role in limiting bacterial dissemination by engaging sialylated bacteria to promote effective phagocytosis and antigen presentation for the adaptive immune response. Mediates the uptake of various enveloped viruses via sialic acid recognition and subsequently induces the formation of intracellular compartments filled with virions (VCCs). In turn, enhances macrophage-to-T-cell transmission of several viruses including HIV-1 or SARS-CoV-2. Acts as an endocytic receptor mediating clathrin dependent endocytosis. Preferentially binds to alpha-2,3-linked sialic acid. Binds to SPN/CD43 on T-cells. May play a role in hemopoiesis. Plays a role in the inhibition of antiviral innate immune by promoting TBK1 degradation via TYROBP and TRIM27-mediated ubiquitination. (Microbial infection) Facilitates viral cytoplasmic entry into activated dendritic cells via recognition of sialylated gangliosides pesent on viral membrane. This chain is Sialoadhesin (SIGLEC1), found in Homo sapiens (Human).